Reading from the N-terminus, the 641-residue chain is 1-deoxy-D-xylulose-5-phosphate synthase (641 aa).

Thiamine diphosphate is bound by residues H71 and 112–114; that span reads SHA. D144 provides a ligand contact to Mg(2+). Residues 145–146, N173, Y284, and E365 contribute to the thiamine diphosphate site; that span reads GA. N173 is a binding site for Mg(2+).

It belongs to the transketolase family. DXPS subfamily. In terms of assembly, homodimer. Requires Mg(2+) as cofactor. It depends on thiamine diphosphate as a cofactor.

The enzyme catalyses D-glyceraldehyde 3-phosphate + pyruvate + H(+) = 1-deoxy-D-xylulose 5-phosphate + CO2. The protein operates within metabolic intermediate biosynthesis; 1-deoxy-D-xylulose 5-phosphate biosynthesis; 1-deoxy-D-xylulose 5-phosphate from D-glyceraldehyde 3-phosphate and pyruvate: step 1/1. Its function is as follows. Catalyzes the acyloin condensation reaction between C atoms 2 and 3 of pyruvate and glyceraldehyde 3-phosphate to yield 1-deoxy-D-xylulose-5-phosphate (DXP). The chain is 1-deoxy-D-xylulose-5-phosphate synthase from Mycolicibacterium paratuberculosis (strain ATCC BAA-968 / K-10) (Mycobacterium paratuberculosis).